Consider the following 221-residue polypeptide: GTP cyclohydrolase III (221 aa).

This sequence belongs to the archaeal-type GTP cyclohydrolase family.

It catalyses the reaction GTP + 3 H2O = 2-amino-5-formylamino-6-(5-phospho-D-ribosylamino)pyrimidin-4(3H)-one + 2 phosphate + 2 H(+). Its function is as follows. Catalyzes the formation of 2-amino-5-formylamino-6-ribofuranosylamino-4(3H)-pyrimidinone ribonucleotide monophosphate and inorganic phosphate from GTP. Also has an independent pyrophosphate phosphohydrolase activity. This is GTP cyclohydrolase III from Pyrobaculum aerophilum (strain ATCC 51768 / DSM 7523 / JCM 9630 / CIP 104966 / NBRC 100827 / IM2).